Reading from the N-terminus, the 200-residue chain is dITP/XTP pyrophosphatase (200 aa).

8–13 (TRNAGK) serves as a coordination point for substrate. D72 serves as the catalytic Proton acceptor. Position 72 (D72) interacts with Mg(2+). Residues S73, 155-158 (FGYD), K178, and 183-184 (HR) contribute to the substrate site.

It belongs to the HAM1 NTPase family. Homodimer. Requires Mg(2+) as cofactor.

The enzyme catalyses XTP + H2O = XMP + diphosphate + H(+). The catalysed reaction is dITP + H2O = dIMP + diphosphate + H(+). It catalyses the reaction ITP + H2O = IMP + diphosphate + H(+). Pyrophosphatase that catalyzes the hydrolysis of nucleoside triphosphates to their monophosphate derivatives, with a high preference for the non-canonical purine nucleotides XTP (xanthosine triphosphate), dITP (deoxyinosine triphosphate) and ITP. Seems to function as a house-cleaning enzyme that removes non-canonical purine nucleotides from the nucleotide pool, thus preventing their incorporation into DNA/RNA and avoiding chromosomal lesions. The sequence is that of dITP/XTP pyrophosphatase from Streptomyces avermitilis (strain ATCC 31267 / DSM 46492 / JCM 5070 / NBRC 14893 / NCIMB 12804 / NRRL 8165 / MA-4680).